Consider the following 397-residue polypeptide: P2X purinoceptor 3 (397 aa).

Residues 1–20 are Cytoplasmic-facing; sequence MNCISDFFTYETTKSVVVKS. Residues 21-43 traverse the membrane as a helical segment; that stretch reads WTIGIINRVVQLLIISYFVGWVF. The Extracellular segment spans residues 44 to 322; it reads LHEKAYQVRD…AGKFNIIPTI (279 aa). Lys-63 and Lys-65 together coordinate ATP. Cystine bridges form between Cys-107–Cys-153, Cys-116–Cys-137, and Cys-122–Cys-147. Glu-111 provides a ligand contact to Mg(2+). The N-linked (GlcNAc...) asparagine glycan is linked to Asn-139. Asp-158 is a Mg(2+) binding site. Position 158 (Asp-158) interacts with Ca(2+). The N-linked (GlcNAc...) asparagine glycan is linked to Asn-170. An ATP-binding site is contributed by Thr-172. N-linked (GlcNAc...) asparagine glycosylation is present at Asn-194. 2 cysteine pairs are disulfide-bonded: Cys-203-Cys-213 and Cys-247-Cys-256. Residues Ser-275, Asn-279, and Arg-281 each coordinate ATP. N-linked (GlcNAc...) asparagine glycosylation is present at Asn-290. Residue Lys-299 coordinates ATP. A helical transmembrane segment spans residues 323–341; that stretch reads ISSVAAFTSVGVGTVLCDI. Over 342–397 the chain is Cytoplasmic; that stretch reads ILLNFLKGADQYKAKKFEEVNETTLKIAALTNPVYPSDQTTAEKQSTDSGAFSIGH. A compositionally biased stretch (polar residues) spans 378 to 391; sequence SDQTTAEKQSTDSG. The disordered stretch occupies residues 378-397; the sequence is SDQTTAEKQSTDSGAFSIGH.

This sequence belongs to the P2X receptor family. In terms of assembly, homotrimer. Forms heterotrimer with P2RX2. Heterotrimeric P2RX2/3 has a ligand dose-response profile that is distinct from either homotrimeric P2RX2 or P2RX3.

It is found in the cell membrane. It catalyses the reaction Ca(2+)(in) = Ca(2+)(out). The catalysed reaction is Na(+)(in) = Na(+)(out). Has high sensitivity to ATP. Fast activation by external ATP. Exhibits rapid desensitization. Sensitives to the ATP agonist:alpha/beta-methylene-ATP. Subject to allosteric inhibition by AF-219. Mg(2+) and Ca(2+) slow deactivation of P2RX3. Its function is as follows. Extracellular ATP-activated non-selective cation channel. Plays particularly important role in sensory neurons where its activation is critical for gustatory, nociceptive responses, visceral reflexes and sensory hypersensitization. This Homo sapiens (Human) protein is P2X purinoceptor 3 (P2RX3).